A 352-amino-acid chain; its full sequence is NADP-dependent oxidoreductase RED1 (352 aa).

NADP(+)-binding positions include 166 to 169, K192, Y208, N231, and 285 to 287; these read GAVG and FIV.

The protein belongs to the NADP-dependent oxidoreductase L4BD family.

It functions in the pathway mycotoxin biosynthesis. Its function is as follows. NADP-dependent oxidoreductase; part of the Tox1B locus, one of the 2 loci that mediate the biosynthesis of T-toxin, a family of linear polyketides 37 to 45 carbons in length, of which the major component is 41 carbons, and which leads to high virulence to maize. One of the PKSs (PKS1 or PKS2) could synthesize a precursor, used subsequently by the other PKS as starter unit, to add additional carbons. Variability in the length of the final carbon backbone C35-47 could be achieved by varying the number of condensation cycles, or use of different starter or extender units or might be due to decarboxylation of the penultimate product, catalyzed by DEC1. Additional proteins are required for the biosynthesis of T-toxin, including oxidoreductases RED1, RED2, RED3, LAM1 and OXI1, as well as esterase TOX9. The sequence is that of NADP-dependent oxidoreductase RED1 from Cochliobolus heterostrophus (strain C4 / ATCC 48331 / race T) (Southern corn leaf blight fungus).